The following is a 353-amino-acid chain: Photosystem II D2 protein (353 aa).

At Thr-2 the chain carries N-acetylthreonine. A Phosphothreonine modification is found at Thr-2. The chain crosses the membrane as a helical span at residues 41 to 61 (CAYFALGGWFTGTTFVTSWYT). Residue His-118 coordinates chlorophyll a. The helical transmembrane segment at 125–141 (GFMLRQFELARSVQLRP) threads the bilayer. Pheophytin a-binding residues include Gln-130 and Asn-143. A helical membrane pass occupies residues 153–166 (VFISVFFIYPLGQS). His-198 is a binding site for chlorophyll a. Residues 208-228 (AALLCAIHGATVENTLFEDGD) traverse the membrane as a helical segment. Residues His-215 and Phe-262 each contribute to the a plastoquinone site. His-215 is a binding site for Fe cation. His-269 serves as a coordination point for Fe cation. A helical transmembrane segment spans residues 279-295 (GLWMSALGVVGLALNLR).

This sequence belongs to the reaction center PufL/M/PsbA/D family. PSII is composed of 1 copy each of membrane proteins PsbA, PsbB, PsbC, PsbD, PsbE, PsbF, PsbH, PsbI, PsbJ, PsbK, PsbL, PsbM, PsbT, PsbX, PsbY, PsbZ, Psb30/Ycf12, at least 3 peripheral proteins of the oxygen-evolving complex and a large number of cofactors. It forms dimeric complexes. It depends on The D1/D2 heterodimer binds P680, chlorophylls that are the primary electron donor of PSII, and subsequent electron acceptors. It shares a non-heme iron and each subunit binds pheophytin, quinone, additional chlorophylls, carotenoids and lipids. There is also a Cl(-1) ion associated with D1 and D2, which is required for oxygen evolution. The PSII complex binds additional chlorophylls, carotenoids and specific lipids. as a cofactor.

Its subcellular location is the plastid membrane. The catalysed reaction is 2 a plastoquinone + 4 hnu + 2 H2O = 2 a plastoquinol + O2. In terms of biological role, photosystem II (PSII) is a light-driven water:plastoquinone oxidoreductase that uses light energy to abstract electrons from H(2)O, generating O(2) and a proton gradient subsequently used for ATP formation. It consists of a core antenna complex that captures photons, and an electron transfer chain that converts photonic excitation into a charge separation. The D1/D2 (PsbA/PsbD) reaction center heterodimer binds P680, the primary electron donor of PSII as well as several subsequent electron acceptors. D2 is needed for assembly of a stable PSII complex. This is Photosystem II D2 protein from Cuscuta reflexa (Southern Asian dodder).